The primary structure comprises 439 residues: Damage-control phosphatase ARMT1 (439 aa).

At A2 the chain carries N-acetylalanine. S4 is subject to Phosphoserine. Residue K40 is modified to N6-acetyllysine. Mn(2+) contacts are provided by D251 and N252. A substrate-binding site is contributed by 251-252 (DN). 2 residues coordinate S-adenosyl-L-methionine: E256 and D289. D289 contacts Mn(2+). Residues 365–369 (DLNYR) and K402 each bind substrate. Positions 399–402 (RTLK) match the Subfamily III RTxK motif motif.

The protein belongs to the damage-control phosphatase family. Sugar phosphate phosphatase III subfamily. Mn(2+) serves as cofactor. The cofactor is Ni(2+). Post-translationally, automethylated.

The catalysed reaction is beta-D-fructose 1-phosphate + H2O = D-fructose + phosphate. The enzyme catalyses beta-D-fructose 6-phosphate = dihydroxyacetone + D-glyceraldehyde 3-phosphate. It carries out the reaction L-glutamyl-[protein] + S-adenosyl-L-methionine = [protein]-L-glutamate 5-O-methyl ester + S-adenosyl-L-homocysteine. Functionally, metal-dependent phosphatase that shows phosphatase activity against several substrates, including fructose-1-phosphate and fructose-6-phosphate. Its preference for fructose-1-phosphate, a strong glycating agent that causes DNA damage rather than a canonical yeast metabolite, suggests a damage-control function in hexose phosphate metabolism. Has also been shown to have O-methyltransferase activity that methylates glutamate residues of target proteins to form gamma-glutamyl methyl ester residues. Possibly methylates PCNA, suggesting it is involved in the DNA damage response. The sequence is that of Damage-control phosphatase ARMT1 from Mus musculus (Mouse).